Consider the following 113-residue polypeptide: Con-Ins G3b (113 aa).

The first 21 residues, 1–21, serve as a signal peptide directing secretion; it reads MTTSFYFLLVALGLLLYVCQS. A propeptide spanning residues 22 to 29 is cleaved from the precursor; it reads SFGNQHTR. Position 34 is a 4-hydroxyproline; partial (Pro-34). Disulfide bonds link Cys-38–Cys-99, Cys-50–Cys-112, and Cys-98–Cys-103. Glu-41 bears the 4-carboxyglutamate mark. His-51 carries the histidine amide modification. A propeptide spans 52–92 (c peptide); the sequence is GKRNDAGKKRGRASPLWQRQGFLSMLKAKRNEAFFLQRDGR. Position 96 is a 4-carboxyglutamate (Glu-96). 4-hydroxyproline; partial is present on Pro-102.

This sequence belongs to the insulin family. In terms of assembly, heterodimer of A and B chains; disulfide-linked. Post-translationally, it is noteworthy that in this dimer, in contrast to Con-Ins G1, the chain B is amidated and not the chain A. As to expression, expressed by the venom gland.

The protein localises to the secreted. In terms of biological role, this venom insulin, from a fish-hunting cone snail, facilitates prey capture by rapidly inducing hypoglycemic shock. It is one of the smallest known insulin found in nature and lacks the C-terminal segment of the B chain that, in human insulin, mediates engagement of the insulin receptor (INSR) and assembly of the hormone's hexameric storage form. Despite lacking this segment, it both binds and activates human insulin receptor (long isoform (HIR-B)) with only a 10-fold lower potency. In vivo, intraperitoneal injection of this peptide into zebrafish lowers blood glucose with the same potency than human insulin. In addition, when applied to water, this peptide reduces overall locomotor activity of zebrafish larvae, observed as a significant decrease in the percentage of time spent swimming and movement frequency. The polypeptide is Con-Ins G3b (Conus geographus (Geography cone)).